A 932-amino-acid chain; its full sequence is uncharacterized protein (932 aa).

5 disordered regions span residues 26–120, 158–289, 304–617, 635–720, and 802–863; these read NINN…NMLT, MGIG…EEKK, NNNN…INHD, QQSQ…PPLV, and SVSS…FPLE. Low complexity-rich tracts occupy residues 41–105 and 163–241; these read NNNI…IISS and NNNN…YGNN. Positions 242–253 are enriched in polar residues; sequence TPVNYIHNNSTP. The span at 265–285 shows a compositional bias: acidic residues; sequence SDEEDSVLYSSDDSEESDYEE. Low complexity predominate over residues 304 to 475; the sequence is NNNNINNNNM…NNNNNNNNNN (172 aa). 2 stretches are compositionally biased toward polar residues: residues 476 to 492 and 527 to 540; these read ENYV…NTES and DIPN…TKQQ. The segment covering 548–590 has biased composition (low complexity); that stretch reads SPVYSPPNNLSPLSSPYLHHNSNNNSNNGGGNSNNNNTNFNYG. Basic and acidic residues predominate over residues 606–617; the sequence is GERDPPHVINHD. Low complexity-rich tracts occupy residues 635–666, 696–707, and 813–853; these read QQSQ…PSSS, SPPNTSISSLSS, and NSSN…NNNS. Positions 854-863 are enriched in basic and acidic residues; the sequence is EPKKPKFPLE.

This is an uncharacterized protein from Dictyostelium discoideum (Social amoeba).